The primary structure comprises 1147 residues: uncharacterized protein (1147 aa).

7 disordered regions span residues 226–245, 255–297, 431–617, 647–670, 705–945, 1003–1032, and 1060–1090; these read FGQG…GQVD, IQGT…QEKA, SQHP…QSCI, EEMD…DPVR, HRHR…RRLQ, RQQQ…EAEK, and YQRR…RLAQ. A compositionally biased stretch (basic and acidic residues) spans 268 to 296; sequence WQKDETQTEDTSKDNHHCIHTSKENHQEK. A compositionally biased stretch (basic residues) spans 431–441; sequence SQHPPKGKAQR. Positions 538–549 are enriched in low complexity; that stretch reads PAGGALPAAGQA. The segment covering 584-603 has biased composition (polar residues); sequence LNETSPLTQKPENQGAQQSL. The span at 743-752 shows a compositional bias: polar residues; sequence NQKTSNNISN. Residues 743-804 adopt a coiled-coil conformation; it reads NQKTSNNISN…ESKAEKKSQL (62 aa). Residues 768 to 802 are compositionally biased toward basic and acidic residues; it reads TDKSKAPKREKEGKLHEEAEAAVGKSKESKAEKKS. Basic residues predominate over residues 807 to 819; the sequence is KGKKTGAKGKRTR. Over residues 870-884 the composition is skewed to polar residues; that stretch reads SQVSIDGRSSPTQTA. Over residues 895-945 the composition is skewed to basic and acidic residues; it reads DRSHEDPSKAFLVKREQEKASRDRLRAERAEMRRLEVERKRREQEEQRRLQ. The stretch at 907 to 1112 forms a coiled coil; the sequence is VKREQEKASR…QKDALKKHLH (206 aa).

This is an uncharacterized protein from Bos taurus (Bovine).